A 208-amino-acid polypeptide reads, in one-letter code: Anti-sigma-W factor RsiW (208 aa).

At methionine 1 to histidine 87 the chain is on the cytoplasmic side. Positions 3, 30, 34, and 37 each coordinate Zn(2+). A helical membrane pass occupies residues proline 88–tryptophan 108. Residues histidine 109–glutamate 208 are Extracellular-facing.

It belongs to the zinc-associated anti-sigma factor (ZAS) superfamily. Anti-sigma-W factor family. As to quaternary structure, forms a heterodimer with cognate sigma factor SigW, which probably prevents SigW from binding to DNA. Zn(2+) serves as cofactor. Is processed by successive proteolytic events. First, the extracellular region of RsiW is cleaved by PrsW (site-1 cleavage) in response to cell envelope stresses. In a reconstituted E.coli system PrsW cuts between Ala-168 and Ser-169 followed by trimming by E.coli Tsp; the endogenous extracellular exopeptidase responsible for the event in B.subtilis has not been identified. Next, it undergoes cleavage at an intramembrane site (site-2 cleavage) mediated by RasP. This cleavage uncovers a cryptic proteolytic tag with conserved alanine residues in the transmembrane segment, that is recognized mainly by the ClpXP protease, which completely degrades the protein in the cytoplasm and leads to the induction of the sigma-W-controlled genes.

The protein resides in the cell membrane. The anti-sigma factor for extracytoplasmic function (ECF) sigma factor sigma-W (SigW). Holds SigW, its cognate ECF sigma factor, in an inactive form until released by regulated intramembrane proteolysis (RIP). SigW and RsiW mediate cell response to cell wall stress. RIP occurs when an extracytoplasmic signal triggers a concerted proteolytic cascade to transmit information and elicit cellular responses. The membrane-spanning regulatory substrate protein is first cut periplasmically (site-1 protease, S1P, PrsW), then within the membrane itself (site-2 protease, S2P, RasP), while cytoplasmic proteases finish degrading the anti-sigma factor, liberating sigma-W. In Bacillus subtilis (strain 168), this protein is Anti-sigma-W factor RsiW (rsiW).